Reading from the N-terminus, the 204-residue chain is dTTP/UTP pyrophosphatase (204 aa).

The Proton acceptor role is filled by aspartate 76.

Belongs to the Maf family. YhdE subfamily. It depends on a divalent metal cation as a cofactor.

Its subcellular location is the cytoplasm. It carries out the reaction dTTP + H2O = dTMP + diphosphate + H(+). The catalysed reaction is UTP + H2O = UMP + diphosphate + H(+). Its function is as follows. Nucleoside triphosphate pyrophosphatase that hydrolyzes dTTP and UTP. May have a dual role in cell division arrest and in preventing the incorporation of modified nucleotides into cellular nucleic acids. The polypeptide is dTTP/UTP pyrophosphatase (Salinibacter ruber (strain DSM 13855 / M31)).